A 127-amino-acid chain; its full sequence is Small ribosomal subunit protein uS13 (127 aa).

The segment at 90–127 is disordered; sequence KRHREGLPVNGQRTRTNARTRKGKRKTVAGRSQSTQKK. Residues 105-117 are compositionally biased toward basic residues; sequence TNARTRKGKRKTV.

The protein belongs to the universal ribosomal protein uS13 family. In terms of assembly, part of the 30S ribosomal subunit. Forms a loose heterodimer with protein S19. Forms two bridges to the 50S subunit in the 70S ribosome.

Functionally, located at the top of the head of the 30S subunit, it contacts several helices of the 16S rRNA. In the 70S ribosome it contacts the 23S rRNA (bridge B1a) and protein L5 of the 50S subunit (bridge B1b), connecting the 2 subunits; these bridges are implicated in subunit movement. Contacts the tRNAs in the A and P-sites. This Salinibacter ruber (strain DSM 13855 / M31) protein is Small ribosomal subunit protein uS13.